We begin with the raw amino-acid sequence, 416 residues long: Tiggy-winkle hedgehog protein (416 aa).

Positions 1-26 are cleaved as a signal peptide; sequence MDVRLHLKQFALLCFISLLLTPCGLA. Cys27 is lipidated: N-palmitoyl cysteine. The Ca(2+) site is built by Glu92, Glu93, Asp98, Thr128, Glu129, Asp132, and Asp134. Zn(2+) is bound by residues His143, Asp150, and His185. Gly200 is lipidated: Cholesterol glycine ester.

Belongs to the hedgehog family. In terms of assembly, multimer. As to quaternary structure, interacts with HHATL/GUP1 which negatively regulates HHAT-mediated palmitoylation of the TWHH N-terminus. Interacts with BOC and CDON. Interacts with HHIP. Interacts with DISP1 via its cholesterol anchor. Interacts with SCUBE2. In terms of processing, the C-terminal domain displays an autoproteolysis activity and a cholesterol transferase activity. Both activities result in the cleavage of the full-length protein into two parts (N-product and C-product) followed by the covalent attachment of a cholesterol moiety to the C-terminal of the newly generated N-product. Cholesterylation is required for the tiggy-winkle hedgehog protein N-product targeting to lipid rafts and multimerization. N-product is the active species in both local and long-range signaling, whereas the C-product is degraded in the endoplasmic reticulum. Post-translationally, N-palmitoylation by HHAT of N-product is required for tiggy-winkle hedgehog protein N-product multimerization and full activity. It is a prerequisite for the membrane-proximal positioning and the subsequent shedding of this N-terminal peptide. The lipidated N- and C-terminal peptides of N-product can be cleaved (shedding). The N-terminal palmitoylated peptide is cleaved at the Cardin-Weintraub (CW) motif site. The cleavage reduced the interactions with heparan sulfate. The cleavage is enhanced by SCUBE2. As to expression, expressed in the ventral midline of the neural tube and brain. In the developing brain, expression occurs in domains that include a discrete region in the floor of the diencephalon. Not detected in the notochord or developing fin bud.

The protein localises to the cell membrane. The protein resides in the endoplasmic reticulum membrane. It is found in the golgi apparatus membrane. In terms of biological role, the C-terminal part of the tiggy-winkle hedgehog protein precursor displays an autoproteolysis and a cholesterol transferase activity. Both activities result in the cleavage of the full-length protein into two parts (N-product and C-product) followed by the covalent attachment of a cholesterol moiety to the C-terminal of the newly generated N-product. Both activities occur in the endoplasmic reticulum. Once cleaved, the C-product is degraded in the endoplasmic reticulum. Functionally, the dually lipidated tiggy-winkle hedgehog protein N-product is a morphogen which is essential for a variety of patterning events during development. Involved in dorso-ventral patterning of the brain and in early patterning of the developing eyes. Binds to the patched (PTCH1) receptor, which functions in association with smoothened (SMO), to activate the transcription of target genes. The protein is Tiggy-winkle hedgehog protein (shhb) of Danio rerio (Zebrafish).